The following is a 421-amino-acid chain: Testin (421 aa).

The 108-residue stretch at Met-92–Asp-199 folds into the PET domain. The interval Glu-133–Cys-164 is disordered. Positions Pro-155 to Cys-164 are enriched in basic and acidic residues. 3 consecutive LIM zinc-binding domains span residues Tyr-234–Glu-297, Pro-299–Val-359, and Gln-362–Ser-421.

Belongs to the prickle / espinas / testin family. As to quaternary structure, interacts via LIM domain 1 with ZYX. Interacts (via LIM domain 3) with ENAH and VASP. Interacts with ALKBH4, talin, actin, alpha-actinin, GRIP1 and PXN. Interacts (via LIM domain 2) with ACTL7A (via N-terminus). Heterodimer with ACTL7A; the heterodimer interacts with ENAH to form a heterotrimer.

Its subcellular location is the cytoplasm. It localises to the cell junction. The protein resides in the focal adhesion. Functionally, scaffold protein that may play a role in cell adhesion, cell spreading and in the reorganization of the actin cytoskeleton. Plays a role in the regulation of cell proliferation. May act as a tumor suppressor. In Microcebus murinus (Gray mouse lemur), this protein is Testin (TES).